The chain runs to 377 residues: MDGTEIAVSPRSLHSELMCPICLDMLKNTMTTKECLHRFCSDCIVTALRSGNKECPTCRKKLVSKRSLRPDPNFDALISKIYPSREEYEAHQDRVLIRLSRLHNQQALSSSIEEGLRMQAMHRAQRVRRPIPGSDQTTTMSGGEGDPGEGEGDGEDVSSDSAPDSAPGPAPKRPRGGGAGGSSVGTGGGGTGGVGGGAGSEDSGDRGGTLGGGTLGPPSPPGAPSPPEPGGEIELVFRPHPLLVEKGEYCQTRYVKTTGNATVDHLSKYLALRIALERRQQQEAGEPGGPGGGASDTGGPDGGGGEGGGAGGGDGPEEPALPSLEGVSEKQYTIYIAPGGGAFTTLNGSLTLELVNEKFWKVSRPLELCYAPTKDPK.

The segment at 1 to 205 is necessary for transcriptional repression; it reads MDGTEIAVSP…GGAGSEDSGD (205 aa). The residue at position 9 (Ser9) is a Phosphoserine. The RING-type zinc finger occupies 19 to 59; sequence CPICLDMLKNTMTTKECLHRFCSDCIVTALRSGNKECPTCR. 3 positions are modified to phosphoserine: Ser111, Ser158, and Ser161. 2 disordered regions span residues 119–234 and 280–325; these read QAMH…GEIE and QQQE…PSLE. The segment covering 146-158 has biased composition (acidic residues); the sequence is DPGEGEGDGEDVS. The Nuclear localization signal motif lies at 172-175; that stretch reads KRPR. The span at 176–199 shows a compositional bias: gly residues; the sequence is GGGAGGSSVGTGGGGTGGVGGGAG. Residues Thr186 and Thr191 each carry the phosphothreonine modification. Residues Ser200 and Ser203 each carry the phosphoserine modification. A necessary for interaction with CBX2 region spans residues 201–377; the sequence is EDSGDRGGTL…LCYAPTKDPK (177 aa). Positions 206–215 are enriched in gly residues; sequence RGGTLGGGTL. The span at 217–229 shows a compositional bias: pro residues; the sequence is PPSPPGAPSPPEP. A phosphoserine mark is found at Ser219 and Ser225. Over residues 286–314 the composition is skewed to gly residues; that stretch reads EPGGPGGGASDTGGPDGGGGEGGGAGGGD.

In terms of assembly, component of chromatin-associated Polycomb (PcG) complexes. Part of the E2F6.com-1 complex in G0 phase composed of E2F6, MGA, MAX, TFDP1, CBX3, BAT8, EUHMTASE1, RING1, RNF2/RING2 MBLR, L3MBTL2 and YAF2. Interacts with CBX2 and PCGF6. Component of a PRC1-like complex. Component of repressive BCOR complex containing Polycomb group subcomplex at least composed of RYBP, PCGF1, BCOR and RNF2/RING2. Interacts with BMI1, PHC2, PCGF2, RNF2; CBX6, CBX7 and CBX8. Interacts with MN1.

Its subcellular location is the nucleus speckle. It carries out the reaction S-ubiquitinyl-[E2 ubiquitin-conjugating enzyme]-L-cysteine + [acceptor protein]-L-lysine = [E2 ubiquitin-conjugating enzyme]-L-cysteine + N(6)-ubiquitinyl-[acceptor protein]-L-lysine.. The protein operates within protein modification; protein ubiquitination. Its function is as follows. Constitutes one of the E3 ubiquitin-protein ligases that mediate monoubiquitination of 'Lys-119' of histone H2A, thereby playing a central role in histone code and gene regulation. H2A 'Lys-119' ubiquitination gives a specific tag for epigenetic transcriptional repression and participates in X chromosome inactivation of female mammals. Essential component of a Polycomb group (PcG) multiprotein PRC1-like complex, a complex class required to maintain the transcriptionally repressive state of many genes, including Hox genes, throughout development. PcG PRC1 complex acts via chromatin remodeling and modification of histones, rendering chromatin heritably changed in its expressibility. Compared to RNF2/RING2, it does not have the main E3 ubiquitin ligase activity on histone H2A, and it may rather act as a modulator of RNF2/RING2 activity. This is E3 ubiquitin-protein ligase RING1 (RING1) from Gorilla gorilla gorilla (Western lowland gorilla).